The sequence spans 361 residues: Large ribosomal subunit protein mL45 (361 aa).

It belongs to the mitochondrion-specific ribosomal protein mL45 family.

It localises to the mitochondrion. In Caenorhabditis briggsae, this protein is Large ribosomal subunit protein mL45 (mrpl-45).